A 441-amino-acid chain; its full sequence is Trigger factor (441 aa).

The PPIase FKBP-type domain occupies 161–246 (GDMVTVDFQG…VKDVKERILA (86 aa)).

This sequence belongs to the FKBP-type PPIase family. Tig subfamily.

It localises to the cytoplasm. The catalysed reaction is [protein]-peptidylproline (omega=180) = [protein]-peptidylproline (omega=0). In terms of biological role, involved in protein export. Acts as a chaperone by maintaining the newly synthesized protein in an open conformation. Functions as a peptidyl-prolyl cis-trans isomerase. The chain is Trigger factor from Desulfotalea psychrophila (strain LSv54 / DSM 12343).